Here is a 380-residue protein sequence, read N- to C-terminus: Shaggy-related protein kinase eta (380 aa).

A Protein kinase domain is found at 40-324 (YMAERVVGTG…ALEACAHPFF (285 aa)). ATP-binding positions include 46-54 (VGTGSFGIV) and Lys-69. A Phosphothreonine modification is found at Thr-104. At Ser-105 the chain carries Phosphoserine. Catalysis depends on Asp-165, which acts as the Proton acceptor. Ser-187 carries the post-translational modification Phosphoserine. Residue Tyr-200 is modified to Phosphotyrosine. Residues Thr-220 and Thr-261 each carry the phosphothreonine modification. A Phosphoserine modification is found at Ser-310. Phosphothreonine is present on Thr-314. Phosphoserine is present on Ser-353.

This sequence belongs to the protein kinase superfamily. CMGC Ser/Thr protein kinase family. GSK-3 subfamily. As to quaternary structure, interacts in vitro with the C-terminal fragment of BZR1 and with BES1/BZR2, but not through the kinase domain. Interacts with BHLH150, beet curly top virus AL4/C4 and tomato golden mosaic virus AL4/AC4. Interacts with YDA. Interacts with MKK4. Interacts with KIB1 and KIB2 in a brassinosteroid (BR)-dependent manner. Interacts with BSK1, BSK6, BSK8 and BSK11. Binds to WRKY46, WRKY54 and WRKY70. Component of a complex made of POLAR, BASL, ASK7/BIN2 and ASK3/SK12. Binds to POLAR and BASL. In terms of processing, autophosphorylated mainly on threonine and serine residues. Ubiquitination and subsequent proteasomal degradation mediated by KIB1. In terms of tissue distribution, in the two outer cell layers of the developing seed coat and restricted to the suspensor cells in developing embryos. Mostly expressed in stomatal lineage cells with asymmetric cell division (ACD) potential. Observed in small cells of non-protruding hypocotyl cell files and of developing cotyledon epidermis.

Its subcellular location is the cytoplasm. The protein resides in the cell cortex. It is found in the nucleus. The protein localises to the cell membrane. The enzyme catalyses L-seryl-[protein] + ATP = O-phospho-L-seryl-[protein] + ADP + H(+). It carries out the reaction L-threonyl-[protein] + ATP = O-phospho-L-threonyl-[protein] + ADP + H(+). With respect to regulation, inactivated by an unknown mechanism after binding of brassinosteroids to the brassinosteroid receptor complex. Inhibited by lithium. Inhibited by dephosphorylation at Tyr-200 by BSU1. Competitive inhibition by KIB1 that reduces substrate (e.g. BZR1) access. Repressed by bikinin. Its function is as follows. Negative regulator in brassinosteroid signal transduction pathway important for plant growth. May be also involved in auxin signaling pathway. Phosphorylates and increases the degradation of BZR1 and BZR2/BES1 by the proteasome. Phosphorylates BHLH150, beet curly top virus C4 and tomato golden mosaic virus AC4 on threonine and serine residues. Upon brassinosteroid signaling, inhibits stomatal development by phosphorylating and inhibiting the MAPKK kinase YDA and the MAPK kinases MKK4 and MKK5. Phosphorylates BSK1, BSK3, BSK5, BSK6, BSK8 and BSK11 in vitro. Phoyphorylates and destabilizes WRKY46, WRKY54 and WRKY70. Mediates BASL nuclear exclusion; kinase activity is required for this function. Required first at the cortical polarity site, to restrict MAPK signaling and promote asymmetric cell division (ACD), and second in the nucleus of stomatal lineage ground cells (SLGCs) or meristemoids, to limit cell division and to promote differentiation into pavement or stomatal guard cells, respectively, likely by initiating BASL polarization. Phosphorylates BASL, YDA and SPCH in vitro and POLAR in vivo. Phosphorylates and inhibits SPCH in the nucleus of SLGC undergoing ACD, thus negatively regulating stomatal development. The protein is Shaggy-related protein kinase eta of Arabidopsis thaliana (Mouse-ear cress).